A 152-amino-acid chain; its full sequence is Catabolic 3-dehydroquinase (152 aa).

The active-site Proton acceptor is tyrosine 24. Substrate contacts are provided by asparagine 75, histidine 81, and aspartate 88. Histidine 101 (proton donor) is an active-site residue. Substrate contacts are provided by residues 102–103 and arginine 112; that span reads IS.

It belongs to the type-II 3-dehydroquinase family. Homododecamer. Adopts a ring-like structure, composed of an arrangement of two hexameric rings stacked on top of one another.

The enzyme catalyses 3-dehydroquinate = 3-dehydroshikimate + H2O. It participates in aromatic compound metabolism; 3,4-dihydroxybenzoate biosynthesis; 3,4-dihydroxybenzoate from 3-dehydroquinate: step 1/2. Is involved in the catabolism of quinate. Allows the utilization of quinate as carbon source via the beta-ketoadipate pathway. This is Catabolic 3-dehydroquinase from Phaeosphaeria nodorum (strain SN15 / ATCC MYA-4574 / FGSC 10173) (Glume blotch fungus).